Consider the following 20-residue polypeptide: Transcriptional regulatory protein PufK (20 aa).

Residues 1 to 11 (MVPYRNPRHQH) are compositionally biased toward basic residues. The interval 1–20 (MVPYRNPRHQHVASVLRSGG) is disordered.

Its function is as follows. Involved in the transcriptional regulation of pufB. The chain is Transcriptional regulatory protein PufK (pufK) from Cereibacter sphaeroides (strain ATCC 17023 / DSM 158 / JCM 6121 / CCUG 31486 / LMG 2827 / NBRC 12203 / NCIMB 8253 / ATH 2.4.1.) (Rhodobacter sphaeroides).